The following is a 235-amino-acid chain: Proteasome subunit alpha type-2-A (235 aa).

Residue K64 forms a Glycyl lysine isopeptide (Lys-Gly) (interchain with G-Cter in ubiquitin) linkage.

This sequence belongs to the peptidase T1A family. Component of the 20S core complex of the 26S proteasome. The 26S proteasome is composed of a core protease (CP), known as the 20S proteasome, capped at one or both ends by the 19S regulatory particle (RP/PA700). The 20S proteasome core is composed of 28 subunits that are arranged in four stacked rings, resulting in a barrel-shaped structure. The two end rings are each formed by seven alpha subunits, and the two central rings are each formed by seven beta subunits. The catalytic chamber with the active sites is on the inside of the barrel.

The protein resides in the cytoplasm. It is found in the nucleus. In terms of biological role, the proteasome is a multicatalytic proteinase complex which is characterized by its ability to cleave peptides with Arg, Phe, Tyr, Leu, and Glu adjacent to the leaving group at neutral or slightly basic pH. The proteasome has an ATP-dependent proteolytic activity. The chain is Proteasome subunit alpha type-2-A (PAB1) from Arabidopsis thaliana (Mouse-ear cress).